A 279-amino-acid polypeptide reads, in one-letter code: GTP cyclohydrolase MptA (279 aa).

Belongs to the GTP cyclohydrolase IV family. Homodimer. The cofactor is Fe(2+).

The catalysed reaction is GTP + H2O = 7,8-dihydroneopterin 2',3'-cyclic phosphate + formate + diphosphate + H(+). Its pathway is cofactor biosynthesis; 5,6,7,8-tetrahydromethanopterin biosynthesis. Functionally, converts GTP to 7,8-dihydro-D-neopterin 2',3'-cyclic phosphate, the first intermediate in the biosynthesis of coenzyme methanopterin. The sequence is that of GTP cyclohydrolase MptA from Korarchaeum cryptofilum (strain OPF8).